Reading from the N-terminus, the 563-residue chain is Arginine--tRNA ligase (563 aa).

Residues 121 to 131 (PNIAKPFSIGH) carry the 'HIGH' region motif.

This sequence belongs to the class-I aminoacyl-tRNA synthetase family. In terms of assembly, monomer.

Its subcellular location is the cytoplasm. It catalyses the reaction tRNA(Arg) + L-arginine + ATP = L-arginyl-tRNA(Arg) + AMP + diphosphate. The polypeptide is Arginine--tRNA ligase (Streptococcus pyogenes serotype M3 (strain ATCC BAA-595 / MGAS315)).